Consider the following 536-residue polypeptide: MDALVSLCKRRGFLFQSSEIYGGVQGFWDYGPLGVELKRNLKDAWWHDMISGHNELVSPAGAPSTFEMVGLDCTIIMHPQVWKCSGHYDLFHDHMVDCRESKKRYRFDQVRGRFVEYQGTKIFVSTLAEIEQEEDEVRRRGMKFFKLRPKNADELTVEKESLTLDKLDSTDNVLAPDAKTLGTLTEPREFNLMFKTTLGALGGEEDTTFLRPETAQGIFVNFKNVVDSSRVRIPFGIGQVGKSFRNEITPRNFTFRSREFEQMEIEFFCHPNQSQEWYRYWRDRRMAWYTKLGLSNESLIMREHHTEELAHYSVGTADIEYAFPFLPEGEYGELEGIAHRGDFDLRSHMEGKLDPATNPMTVELNEHGKPKHRGSGKDLAYRDDITNEKFVPHVIEPSAGADRAALAFLCEAYTEDEAPDENGKMQTRTVMKLDPRLAPIKAAVFPLVKKDGMPEVAQEIYGALKEHYNVFYDAKGAVGRRYRRQDEAGTPYCITVDGDSLTDKTVTIRDRDTLEQTRVKIDDVVSEIQSRMKAST.

The insert stretch occupies residues 56–67; that stretch reads LVSPAGAPSTFE. Arg-106 and Glu-213 together coordinate substrate. ATP is bound by residues 245 to 247, 255 to 260, and 333 to 334; these read RNE, FRSREF, and EL. 260-264 lines the substrate pocket; that stretch reads FEQME. The insert stretch occupies residues 350–372; the sequence is EGKLDPATNPMTVELNEHGKPKH. Residue 396-400 participates in substrate binding; it reads EPSAG. 400–403 contacts ATP; the sequence is GADR.

Belongs to the class-II aminoacyl-tRNA synthetase family. Homodimer.

The protein resides in the cytoplasm. The catalysed reaction is tRNA(Gly) + glycine + ATP = glycyl-tRNA(Gly) + AMP + diphosphate. In terms of biological role, catalyzes the attachment of glycine to tRNA(Gly). This chain is Glycine--tRNA ligase, found in Rhodopirellula baltica (strain DSM 10527 / NCIMB 13988 / SH1).